A 312-amino-acid chain; its full sequence is NAD(P)(+)--arginine ADP-ribosyltransferase 2 (312 aa).

A signal peptide spans 1–20 (MELLALRWVLLAGTLLSTSA). Residues 21 to 31 (ASSALQEGDLG) constitute a propeptide that is removed on maturation. 2 cysteine pairs are disulfide-bonded: Cys51–Cys260 and Cys159–Cys208. The TR mART core domain maps to 71-256 (YAYAVGWRKA…IYLRSKGKMS (186 aa)). Tyr108, Arg164, and Gln183 together coordinate NAD(+). Arg164 is a catalytic residue. Residue Ser186 is part of the active site. An NAD(+)-binding site is contributed by Ser217. Residue Glu224 is part of the active site. Residues 267–312 (GGQWGRGHQEVGLGLSPGLALPVLPCSNCSCWGSGHRAGDPIPAAV) constitute a propeptide that is removed on maturation.

It belongs to the Arg-specific ADP-ribosyltransferase family.

It is found in the secreted. The protein resides in the extracellular space. The catalysed reaction is L-arginyl-[protein] + NAD(+) = N(omega)-(ADP-D-ribosyl)-L-arginyl-[protein] + nicotinamide + H(+). The chain is NAD(P)(+)--arginine ADP-ribosyltransferase 2 from Gallus gallus (Chicken).